Here is a 1454-residue protein sequence, read N- to C-terminus: Serine/threonine-protein kinase VPS15 (1454 aa).

Gly-2 carries the N-myristoyl glycine lipid modification. A Protein kinase domain is found at 27-300 (VHYVSQLNSS…LLNKYRGIFF (274 aa)). ATP is bound by residues 33–41 (LNSSRFLKT) and Lys-54. The active-site Proton acceptor is Asp-147. HEAT repeat units lie at residues 460-497 (NKID…SVRK), 576-613 (KLIQ…FFGR), 615-652 (RTND…LLGT), and 654-691 (TLEQ…TGLI). WD repeat units lie at residues 1078–1118 (NEPN…VGEV), 1126–1165 (DCSS…QESE), 1229–1268 (PRHG…LIRS), 1275–1315 (APIT…CQYA), 1344–1382 (RSLN…SSKA), and 1422–1454 (YHHD…GIFQ).

It belongs to the protein kinase superfamily. Ser/Thr protein kinase family. As to quaternary structure, component of the autophagy-specific VPS34 PI3-kinase complex I composed of VPS15, VPS30, VPS34, ATG14 and ATG38; and of the VPS34 PI3-kinase complex II composed of VPS15, VPS30, VPS34 and VPS38. Interacts directly with ATG14 and GPA1. Interacts directly with VPS34. Post-translationally, autophosphorylated.

The protein localises to the golgi apparatus. The protein resides in the trans-Golgi network membrane. It is found in the endosome membrane. It carries out the reaction L-seryl-[protein] + ATP = O-phospho-L-seryl-[protein] + ADP + H(+). The catalysed reaction is L-threonyl-[protein] + ATP = O-phospho-L-threonyl-[protein] + ADP + H(+). Functionally, serine/threonine-protein kinase required for cytoplasm to vacuole transport (Cvt) and autophagy as a part of the autophagy-specific VPS34 PI3-kinase complex I. This complex is essential to recruit the ATG8-phosphatidylinositol conjugate and the ATG12-ATG5 conjugate to the pre-autophagosomal structure. Is also involved in endosome-to-Golgi retrograde transport as part of the VPS34 PI3-kinase complex II. This second complex is required for the endosome-to-Golgi retrieval of PEP1 and KEX2, and the recruitment of VPS5 and VPS7, two components of the retromer complex, to endosomal membranes (probably through the synthesis of a specific pool of phosphatidylinositol 3-phosphate recruiting the retromer to the endosomes). By regulating VPS34 kinase activity, VPS15 appears to be essential for the efficient delivery of soluble hydrolases to the yeast vacuole. May function as a G protein beta subunit to propagate the pheromone response at the endosome with GPA1. The protein is Serine/threonine-protein kinase VPS15 of Saccharomyces cerevisiae (strain ATCC 204508 / S288c) (Baker's yeast).